A 481-amino-acid chain; its full sequence is Glutamate--cysteine ligase (481 aa).

Belongs to the glutamate--cysteine ligase type 1 family. Type 1 subfamily.

The enzyme catalyses L-cysteine + L-glutamate + ATP = gamma-L-glutamyl-L-cysteine + ADP + phosphate + H(+). Its pathway is sulfur metabolism; glutathione biosynthesis; glutathione from L-cysteine and L-glutamate: step 1/2. This chain is Glutamate--cysteine ligase, found in Clostridium acetobutylicum (strain ATCC 824 / DSM 792 / JCM 1419 / IAM 19013 / LMG 5710 / NBRC 13948 / NRRL B-527 / VKM B-1787 / 2291 / W).